We begin with the raw amino-acid sequence, 57 residues long: Small ribosomal subunit protein bS21 (57 aa).

Residues 24–57 (SKSGTLQESRKREFYEKPSVKRKKKSEAARKRKF) are disordered. A compositionally biased stretch (basic and acidic residues) spans 31 to 42 (ESRKREFYEKPS). A compositionally biased stretch (basic residues) spans 43 to 57 (VKRKKKSEAARKRKF).

Belongs to the bacterial ribosomal protein bS21 family.

This Listeria innocua serovar 6a (strain ATCC BAA-680 / CLIP 11262) protein is Small ribosomal subunit protein bS21 (rpsU).